The primary structure comprises 156 residues: Ribosomally synthesized cyclic peptide victorin precursosr vicA1 (156 aa).

A signal peptide spans 1 to 21 (MVRITALMSGSILLFALQALA). Propeptides lie at residues 22–36 (MPVE…AEKR), 43–55 (KRGE…EEKR), 62–74 (KRGE…EEKR), 81–93 (KRGE…EEKR), 100–112 (KRGE…EEKR), 119–131 (KRGE…EEKR), and 138–150 (KRGE…EEKR).

VicA1 is processed by several endopeptidases including kexin proteases as well as the cluster-specific peptidases vicP1 and vicP2 to produce 7 identical copies of the hexapeptide Gly-Leu-Lys-Leu-Ala-Phe, that are further modified to yield victorins. After being excised from the precursor peptide, the core peptides are cyclized and modified post-translationally by enzymes encoded within the gene cluster. The ustYa family protein vicYb is required for the formation of the macrocycle in victorin and the copper amine oxidases (CAOs) vicK1 and vicK2 are responsible for converting victorin to the active form by oxidizing the N-terminal glycyl residue in the peptides to glyoxylate. Relaxed substrate specificity of enzymes in the victorin biosynthetic pathway results in a metabolic grid that produces a set of analogs including victorinines B, C, E or HV-toxin M.

The protein operates within mycotoxin biosynthesis. In terms of biological role, ribosomally synthesized cyclic peptide victorin precursor, part of the gene cluster that mediates the biosynthesis of the secondary metabolite victorin, the molecular basis for Victoria blight of oats. The vicA1 translated product contains a 7-fold repeated peptide embedding the hexapeptide Gly-Leu-Lys-Leu-Ala-Phe, that is converted into the cyclic victorin. This is Ribosomally synthesized cyclic peptide victorin precursosr vicA1 from Bipolaris victoriae (strain FI3) (Victoria blight of oats agent).